The sequence spans 178 residues: Mediator of RNA polymerase II transcription subunit 28 (178 aa).

The segment at 1 to 25 (MAAPLGGMFSGQQPGPPQPPPGLLG) is disordered. Positions 109–145 (QVIKEDVSELRNELQRKDALVQKHLTKLRHWQQVLED) form a coiled coil.

Belongs to the Mediator complex subunit 28 family. Component of the Mediator complex, which is composed of MED1, MED4, MED6, MED7, MED8, MED9, MED10, MED11, MED12, MED13, MED13L, MED14, MED15, MED16, MED17, MED18, MED19, MED20, MED21, MED22, MED23, MED24, MED25, MED26, MED27, MED29, MED30, MED31, CCNC, CDK8 and CDC2L6/CDK11. The MED12, MED13, CCNC and CDK8 subunits form a distinct module termed the CDK8 module. Mediator containing the CDK8 module is less active than Mediator lacking this module in supporting transcriptional activation. Individual preparations of the Mediator complex lacking one or more distinct subunits have been variously termed ARC, CRSP, DRIP, PC2, SMCC and TRAP. Forms a ternary complex with NF2/merlin and GRB2. Binds to actin.

Its subcellular location is the nucleus. The protein localises to the cytoplasm. The protein resides in the membrane. Component of the Mediator complex, a coactivator involved in the regulated transcription of nearly all RNA polymerase II-dependent genes. Mediator functions as a bridge to convey information from gene-specific regulatory proteins to the basal RNA polymerase II transcription machinery. Mediator is recruited to promoters by direct interactions with regulatory proteins and serves as a scaffold for the assembly of a functional preinitiation complex with RNA polymerase II and the general transcription factors. May be part of a complex containing NF2/merlin that participates in cellular signaling to the actin cytoskeleton downstream of tyrosine kinase signaling pathways. The sequence is that of Mediator of RNA polymerase II transcription subunit 28 (MED28) from Bos taurus (Bovine).